The primary structure comprises 605 residues: Replication protein E1 (605 aa).

A Nuclear localization signal motif is present at residues 76-78; sequence KRK. Ser-81 and Ser-89 each carry phosphoserine; by host. Positions 88 to 97 match the Nuclear export signal motif; it reads LSPRLESISL. A DNA-binding region region spans residues 145-308; it reads HLGTVDIHYT…TIVGHQSTEA (164 aa). An SF3 helicase domain is found at 407 to 557; the sequence is VNVIMFLAAL…FPMKPDNTPE (151 aa). 433–440 lines the ATP pocket; sequence GPPNTGKS. Residue Lys-514 forms a Glycyl lysine isopeptide (Lys-Gly) (interchain with G-Cter in SUMO) linkage. The disordered stretch occupies residues 580-605; that stretch reads DQEDEGENGESQQAFQCSARSANEHL. Residues 588-605 are compositionally biased toward polar residues; that stretch reads GESQQAFQCSARSANEHL.

Belongs to the papillomaviridae E1 protein family. In terms of assembly, can form hexamers. Interacts with E2 protein; this interaction increases E1 DNA binding specificity. Interacts with host DNA polymerase subunit POLA2. Interacts with host single stranded DNA-binding protein RPA1. Interacts with host TOP1; this interaction stimulates the enzymatic activity of TOP1. In terms of processing, phosphorylated. Post-translationally, sumoylated.

Its subcellular location is the host nucleus. The enzyme catalyses Couples ATP hydrolysis with the unwinding of duplex DNA by translocating in the 3'-5' direction.. It catalyses the reaction ATP + H2O = ADP + phosphate + H(+). In terms of biological role, ATP-dependent DNA 3'-5' helicase required for initiation of viral DNA replication. It forms a complex with the viral E2 protein. The E1-E2 complex binds to the replication origin which contains binding sites for both proteins. During the initial step, a dimer of E1 interacts with a dimer of protein E2 leading to a complex that binds the viral origin of replication with high specificity. Then, a second dimer of E1 displaces the E2 dimer in an ATP-dependent manner to form the E1 tetramer. Following this, two E1 monomers are added to each half of the site, which results in the formation of two E1 trimers on the viral ori. Subsequently, two hexamers will be created. The double hexamer acts as a bi-directional helicase machinery and unwinds the viral DNA and then recruits the host DNA polymerase to start replication. The sequence is that of Replication protein E1 from Homo sapiens (Human).